The primary structure comprises 62 residues: DNA-binding protein 7 (62 aa).

Belongs to the 7 kDa DNA-binding/endoribonuclease P2 family. As to quaternary structure, monomer.

Its subcellular location is the cytoplasm. Its function is as follows. Can constrain negative DNA supercoils. May be involved in maintaining the integrity of the genome at high temperature. This Metallosphaera sedula (strain ATCC 51363 / DSM 5348 / JCM 9185 / NBRC 15509 / TH2) protein is DNA-binding protein 7.